Here is a 473-residue protein sequence, read N- to C-terminus: Asparagine--tRNA ligase (473 aa).

It belongs to the class-II aminoacyl-tRNA synthetase family. In terms of assembly, homodimer.

The protein resides in the cytoplasm. It catalyses the reaction tRNA(Asn) + L-asparagine + ATP = L-asparaginyl-tRNA(Asn) + AMP + diphosphate + H(+). This is Asparagine--tRNA ligase from Treponema denticola (strain ATCC 35405 / DSM 14222 / CIP 103919 / JCM 8153 / KCTC 15104).